A 614-amino-acid chain; its full sequence is Probable Xaa-Pro aminopeptidase P (614 aa).

Positions 409, 420, 518, and 532 each coordinate Mn(2+).

This sequence belongs to the peptidase M24B family. Requires Mn(2+) as cofactor.

It catalyses the reaction Release of any N-terminal amino acid, including proline, that is linked to proline, even from a dipeptide or tripeptide.. Catalyzes the removal of a penultimate prolyl residue from the N-termini of peptides. This is Probable Xaa-Pro aminopeptidase P (ampp) from Aspergillus niger (strain ATCC MYA-4892 / CBS 513.88 / FGSC A1513).